Reading from the N-terminus, the 316-residue chain is 4-hydroxy-3-methylbut-2-enyl diphosphate reductase (316 aa).

C12 serves as a coordination point for [4Fe-4S] cluster. (2E)-4-hydroxy-3-methylbut-2-enyl diphosphate-binding residues include H43 and H81. The dimethylallyl diphosphate site is built by H43 and H81. H43 and H81 together coordinate isopentenyl diphosphate. C103 contributes to the [4Fe-4S] cluster binding site. H131 serves as a coordination point for (2E)-4-hydroxy-3-methylbut-2-enyl diphosphate. H131 is a dimethylallyl diphosphate binding site. Residue H131 participates in isopentenyl diphosphate binding. Residue E133 is the Proton donor of the active site. Position 170 (T170) interacts with (2E)-4-hydroxy-3-methylbut-2-enyl diphosphate. C198 is a binding site for [4Fe-4S] cluster. (2E)-4-hydroxy-3-methylbut-2-enyl diphosphate contacts are provided by S226, N228, and S271. Residues S226, N228, and S271 each contribute to the dimethylallyl diphosphate site. Isopentenyl diphosphate-binding residues include S226, N228, and S271.

This sequence belongs to the IspH family. [4Fe-4S] cluster serves as cofactor.

It carries out the reaction isopentenyl diphosphate + 2 oxidized [2Fe-2S]-[ferredoxin] + H2O = (2E)-4-hydroxy-3-methylbut-2-enyl diphosphate + 2 reduced [2Fe-2S]-[ferredoxin] + 2 H(+). The catalysed reaction is dimethylallyl diphosphate + 2 oxidized [2Fe-2S]-[ferredoxin] + H2O = (2E)-4-hydroxy-3-methylbut-2-enyl diphosphate + 2 reduced [2Fe-2S]-[ferredoxin] + 2 H(+). Its pathway is isoprenoid biosynthesis; dimethylallyl diphosphate biosynthesis; dimethylallyl diphosphate from (2E)-4-hydroxy-3-methylbutenyl diphosphate: step 1/1. It participates in isoprenoid biosynthesis; isopentenyl diphosphate biosynthesis via DXP pathway; isopentenyl diphosphate from 1-deoxy-D-xylulose 5-phosphate: step 6/6. In terms of biological role, catalyzes the conversion of 1-hydroxy-2-methyl-2-(E)-butenyl 4-diphosphate (HMBPP) into a mixture of isopentenyl diphosphate (IPP) and dimethylallyl diphosphate (DMAPP). Acts in the terminal step of the DOXP/MEP pathway for isoprenoid precursor biosynthesis. The polypeptide is 4-hydroxy-3-methylbut-2-enyl diphosphate reductase (Geobacillus kaustophilus (strain HTA426)).